Consider the following 122-residue polypeptide: uncharacterized protein (122 aa).

The next 2 helical transmembrane spans lie at 43–63 (PIII…IFFI) and 76–96 (AVAD…ILYF).

The protein localises to the membrane. This is an uncharacterized protein from Schizosaccharomyces pombe (strain 972 / ATCC 24843) (Fission yeast).